The sequence spans 781 residues: Probable aminopeptidase 2 (781 aa).

Residues E105 and 237 to 241 (GAMEN) each bind substrate. H272 is a binding site for Zn(2+). The active-site Proton acceptor is the E273. H276 and E295 together coordinate Zn(2+).

The protein belongs to the peptidase M1 family. Zn(2+) serves as cofactor.

It localises to the cytoplasm. This Sulfurisphaera tokodaii (strain DSM 16993 / JCM 10545 / NBRC 100140 / 7) (Sulfolobus tokodaii) protein is Probable aminopeptidase 2 (ape2).